We begin with the raw amino-acid sequence, 86 residues long: CLAVATA3/ESR (CLE)-related protein 8 (86 aa).

An N-terminal signal peptide occupies residues 1 to 24 (MKVLKRDSMLLLITLYFLLTTSMA). The tract at residues 43–86 (DLKQNKAKPHLPNLFRTMRRVPTGPNPLHHISPPQPGSLNYARN) is disordered. Hydroxyproline occurs at positions 64 and 67. An O-linked (Ara...) hydroxyproline glycan is attached at P67.

The protein belongs to the CLV3/ESR signal peptide family. Post-translationally, the O-glycosylation (arabinosylation) of the hydroxyproline Pro-67 enhances binding affinity of the CLE8p peptide for its receptor. Mostly expressed in siliques, and, to a lower extent, in flowers. Expressed in young embryos and endosperm.

It localises to the secreted. Its subcellular location is the extracellular space. In terms of biological role, extracellular signal peptide that regulates cell fate. Represses root apical meristem maintenance. Positively regulates the expression of the transcription factor WOX8 and thus, regulates early embryo development. Regulates the transition of protophloem cells from proliferation to differentiation, thus impinging on postembryonic growth capacity of the root meristem; this signaling pathway requires CRN and CLV2. The protein is CLAVATA3/ESR (CLE)-related protein 8 of Arabidopsis thaliana (Mouse-ear cress).